The chain runs to 260 residues: NAD-capped RNA hydrolase NudC (260 aa).

Substrate is bound at residue Arg69. Residues Cys98 and Cys101 each contribute to the Zn(2+) site. Residue Glu111 participates in substrate binding. The Zn(2+) site is built by Cys116 and Cys119. A substrate-binding site is contributed by Tyr124. One can recognise a Nudix hydrolase domain in the interval 125-248 (PQIAPCIIVA…TVARRLIEDT (124 aa)). Ala158, Glu174, and Glu178 together coordinate a divalent metal cation. The Nudix box motif lies at 159-180 (GFVEVGETLEQTVVREVMEESQ). 192 to 199 (QPWPFPHS) contacts substrate. A divalent metal cation is bound at residue Glu219. Ala241 lines the substrate pocket.

Belongs to the Nudix hydrolase family. NudC subfamily. Homodimer. Requires Mg(2+) as cofactor. Mn(2+) serves as cofactor. The cofactor is Zn(2+).

It catalyses the reaction a 5'-end NAD(+)-phospho-ribonucleoside in mRNA + H2O = a 5'-end phospho-adenosine-phospho-ribonucleoside in mRNA + beta-nicotinamide D-ribonucleotide + 2 H(+). The enzyme catalyses NAD(+) + H2O = beta-nicotinamide D-ribonucleotide + AMP + 2 H(+). It carries out the reaction NADH + H2O = reduced beta-nicotinamide D-ribonucleotide + AMP + 2 H(+). MRNA decapping enzyme that specifically removes the nicotinamide adenine dinucleotide (NAD) cap from a subset of mRNAs by hydrolyzing the diphosphate linkage to produce nicotinamide mononucleotide (NMN) and 5' monophosphate mRNA. The NAD-cap is present at the 5'-end of some mRNAs and stabilizes RNA against 5'-processing. Has preference for mRNAs with a 5'-end purine. Catalyzes the hydrolysis of a broad range of dinucleotide pyrophosphates. The sequence is that of NAD-capped RNA hydrolase NudC from Pectobacterium atrosepticum (strain SCRI 1043 / ATCC BAA-672) (Erwinia carotovora subsp. atroseptica).